Reading from the N-terminus, the 464-residue chain is MRIFDTSKREKVEFSPIKDGEVSIYLCGPTVYDDAHLGHAKSAVSFDLLRRVLKALGCKVKFARNYTDIDDKILNKMAQTGQSLEEITNKYIAHYESDMGALNVLDPDFKPKATQCLEAIISYIKVLMDRGVAYKTSDGIYFDTSKDSGYFSISGKDNNTDLIARVASFGEKRDEKDFVLWKFDEKWYESPFGKGRPGWHTECVAMIREFLSDKENDKFEIDIHAGGIDLLFPHHENEASQCRCAYHKNLSKYWMHNGFIKVNNEKMSKSLNNSFFVKDALKNVHGEVLRYYLLTSHYRAHFNYSDEDLVASKKRLDKIYRLKKRVDGVQAGMANESFKSELLEALSDDLNASKALASVDEFVKTANERLDNNPKDKAYKAEVVANLELIGEILGIAITNYVEYFQFGVSDEQKEHIQKLLDERAVAKKERNFARADEIRDELAKMNISIMDTPNGAVWERNNE.

Cysteine 27 provides a ligand contact to Zn(2+). A 'HIGH' region motif is present at residues 29-39 (PTVYDDAHLGH). Zn(2+) is bound by residues cysteine 203, histidine 234, and glutamate 238. Residues 266 to 270 (KMSKS) carry the 'KMSKS' region motif. Lysine 269 is a binding site for ATP.

Belongs to the class-I aminoacyl-tRNA synthetase family. In terms of assembly, monomer. Requires Zn(2+) as cofactor.

It localises to the cytoplasm. It catalyses the reaction tRNA(Cys) + L-cysteine + ATP = L-cysteinyl-tRNA(Cys) + AMP + diphosphate. The protein is Cysteine--tRNA ligase of Campylobacter concisus (strain 13826).